The following is a 476-amino-acid chain: Cysteine--tRNA ligase (476 aa).

Residue cysteine 27 participates in Zn(2+) binding. The short motif at 29–39 (PTTYNYIHLGN) is the 'HIGH' region element. Positions 207, 232, and 236 each coordinate Zn(2+). The 'KMSKS' region signature appears at 264-268 (KMSKS). Lysine 267 lines the ATP pocket.

It belongs to the class-I aminoacyl-tRNA synthetase family. In terms of assembly, monomer. Zn(2+) serves as cofactor.

Its subcellular location is the cytoplasm. The enzyme catalyses tRNA(Cys) + L-cysteine + ATP = L-cysteinyl-tRNA(Cys) + AMP + diphosphate. The sequence is that of Cysteine--tRNA ligase from Moorella thermoacetica (strain ATCC 39073 / JCM 9320).